Consider the following 301-residue polypeptide: Protoheme IX farnesyltransferase 2 (301 aa).

Helical transmembrane passes span 29–49 (VVALMLLTVLVGMCLAVPTAV), 51–71 (VQPLIAGMFGIALMAGSAAAL), 101–121 (ALIFAASIGGLGFVVLYVLVN), 123–143 (LTAWLTFASLIGYALVYTAYL), 150–170 (NIVIGGLAGAMPPLLGWTAVT), 177–197 (ALLLVIIIFTWTPPHFWALAI), 223–243 (CILLYTVLLAIACLLPVLVGM), 244–264 (CGPMYFVCSSLLSSVFIYKAW), and 281–301 (FSIYHLMLLFMALLIDHYLWS).

Belongs to the UbiA prenyltransferase family. Protoheme IX farnesyltransferase subfamily.

Its subcellular location is the cell inner membrane. It catalyses the reaction heme b + (2E,6E)-farnesyl diphosphate + H2O = Fe(II)-heme o + diphosphate. The protein operates within porphyrin-containing compound metabolism; heme O biosynthesis; heme O from protoheme: step 1/1. In terms of biological role, converts heme B (protoheme IX) to heme O by substitution of the vinyl group on carbon 2 of heme B porphyrin ring with a hydroxyethyl farnesyl side group. The polypeptide is Protoheme IX farnesyltransferase 2 (Shewanella sp. (strain W3-18-1)).